We begin with the raw amino-acid sequence, 747 residues long: Cysteine--tRNA ligase, cytoplasmic (747 aa).

The disordered stretch occupies residues 1 to 25 (MTDSWERGKGRRTQPPWSAPNTQAQ). Residues 15-25 (PPWSAPNTQAQ) are compositionally biased toward polar residues. Residue Cys54 participates in Zn(2+) binding. L-cysteine is bound at residue Gly55. The short motif at 56–66 (PTVYDASHMGH) is the 'HIGH' region element. Position 95 (Thr95) interacts with L-cysteine. The short motif at 100–103 (KIIK) is the 'KIIK' region element. Zn(2+) is bound by residues Cys347, His372, and Glu376. His372 lines the L-cysteine pocket. The 'KMSKS' region signature appears at 405 to 409 (KMSKS). Residue Lys408 coordinates ATP. Residues 651-683 (EEKRKAEEEKQRKKEEAARKKQQQEAAKLEKMK) are compositionally biased toward basic and acidic residues. Residues 651-722 (EEKRKAEEEK…KELSKGQSKK (72 aa)) are disordered.

The protein belongs to the class-I aminoacyl-tRNA synthetase family. In terms of assembly, homodimer. Requires Zn(2+) as cofactor.

The protein localises to the cytoplasm. It carries out the reaction tRNA(Cys) + L-cysteine + ATP = L-cysteinyl-tRNA(Cys) + AMP + diphosphate. Functionally, catalyzes the ATP-dependent ligation of cysteine to tRNA(Cys). The polypeptide is Cysteine--tRNA ligase, cytoplasmic (cars1) (Xenopus tropicalis (Western clawed frog)).